The primary structure comprises 417 residues: Pre-mRNA-splicing factor PRP46 (417 aa).

7 WD repeats span residues 119–159 (AHQG…LKAT), 162–201 (GHIMGVRSLAVSSRYPYLFSGSEDKTVKCWDLERTNSSSG), 209–248 (GHVGGIYAMALHPELDLLFTGGRDSVIRVWDLRSRTEIMV), 251–290 (GHRSDITSIASQIGDPQIITSSMDATIRLWDIRKATTQLA), 293–334 (HHSK…NEFG), 337–376 (GENKIINTLSINPSNNTLFSGYDDGRMEFYDYVSGDLLQS), and 385–417 (STESAIYASTFDMSGLRLITCEGDKSIKIWGEE).

The protein belongs to the WD repeat PRL1/PRL2 family. Associated with the spliceosome.

The protein localises to the cytoplasm. The protein resides in the nucleus. Its function is as follows. Involved in pre-mRNA splicing and required for cell cycle progression at G2/M. This is Pre-mRNA-splicing factor PRP46 (PRP46) from Debaryomyces hansenii (strain ATCC 36239 / CBS 767 / BCRC 21394 / JCM 1990 / NBRC 0083 / IGC 2968) (Yeast).